A 421-amino-acid chain; its full sequence is UDP-glucuronic acid decarboxylase 1 (421 aa).

The Cytoplasmic segment spans residues 1-19 (MVRTRIQRLLTGINRRMMK). A helical membrane pass occupies residues 20-40 (LLIALALIAYVASVWGNFVNM). The Lumenal segment spans residues 41 to 421 (SKSIQENGEQ…RVKKGRTRHN (381 aa)). Residues glycine 99, phenylalanine 100, valine 101, aspartate 120, asparagine 121, phenylalanine 123, threonine 124, glycine 125, aspartate 145, and valine 146 each coordinate NAD(+). Residues leucine 150 and tyrosine 151 each contribute to the UDP-alpha-D-glucuronate site. NAD(+) is bound by residues leucine 160 and serine 162. Lysine 178 contacts UDP-alpha-D-glucuronate. Residue threonine 179 participates in NAD(+) binding. Asparagine 186, glycine 189, lysine 192, and arginine 193 together coordinate UDP-alpha-D-glucuronate. Alanine 201, tyrosine 232, and lysine 236 together coordinate NAD(+). Tyrosine 232 functions as the Proton acceptor in the catalytic mechanism. UDP-alpha-D-glucuronate-binding residues include tyrosine 246, glutamine 249, and glutamate 250. Threonine 262, histidine 268, and arginine 273 together coordinate NAD(+). Asparagine 317 and asparagine 386 each carry an N-linked (GlcNAc...) asparagine glycan. A disordered region spans residues 400–421 (ANNQYIPKPKPARVKKGRTRHN). Basic residues predominate over residues 409–421 (KPARVKKGRTRHN).

Belongs to the NAD(P)-dependent epimerase/dehydratase family. UDP-glucuronic acid decarboxylase subfamily. Homodimer and homotetramer. The cofactor is NAD(+).

It is found in the golgi apparatus. The protein localises to the golgi stack membrane. The enzyme catalyses UDP-alpha-D-glucuronate + H(+) = UDP-alpha-D-xylose + CO2. It functions in the pathway nucleotide-sugar biosynthesis; UDP-alpha-D-xylose biosynthesis; UDP-alpha-D-xylose from UDP-alpha-D-glucuronate: step 1/1. Catalyzes the NAD-dependent decarboxylation of UDP-glucuronic acid to UDP-xylose. Necessary for the biosynthesis of the core tetrasaccharide in glycosaminoglycan biosynthesis. The protein is UDP-glucuronic acid decarboxylase 1 (uxs1) of Xenopus tropicalis (Western clawed frog).